Here is a 409-residue protein sequence, read N- to C-terminus: Fructose-1,6-bisphosphatase, chloroplastic (409 aa).

Residues 1-49 constitute a chloroplast transit peptide; that stretch reads MAAATTTTSRPLLLSRQQAAASSLQCRLPRRPGSSLFAGQGQASTPNVR. 5 residues coordinate Mg(2+): Glu-131, Glu-160, Asp-181, Leu-183, and Asp-184. 184–187 lines the substrate pocket; sequence DGSS. A disulfide bond links Cys-223 and Cys-228. Residues Asn-287, Tyr-319, Tyr-337, Tyr-339, and Lys-349 each coordinate substrate. Residue Glu-355 participates in Mg(2+) binding.

Belongs to the FBPase class 1 family. Homotetramer. It depends on Mg(2+) as a cofactor. In photosynthetically active tissues, and in the shoot and root apical meristems.

It is found in the plastid. The protein resides in the chloroplast. The enzyme catalyses beta-D-fructose 1,6-bisphosphate + H2O = beta-D-fructose 6-phosphate + phosphate. It participates in carbohydrate biosynthesis; Calvin cycle. In Triticum aestivum (Wheat), this protein is Fructose-1,6-bisphosphatase, chloroplastic (FBP).